The primary structure comprises 431 residues: Venom metalloproteinase 1 (431 aa).

The N-terminal stretch at 1 to 22 is a signal peptide; that stretch reads MDLFILTRFILFLSFFMKSIHC. Residues Asn-64, Asn-113, Asn-148, and Asn-187 are each glycosylated (N-linked (GlcNAc...) asparagine). Residues 228–428 form the Peptidase M12B domain; sequence DLLMKTSRRL…TSAACLKDTY (201 aa). Disulfide bonds link Cys-340–Cys-423 and Cys-379–Cys-407. His-363 lines the Zn(2+) pocket. Glu-364 is an active-site residue. Zn(2+) contacts are provided by His-367 and His-373. Asn-414 is a glycosylation site (N-linked (GlcNAc...) asparagine).

The protein in the C-terminal section; belongs to the venom metalloproteinase (M12B) family. Monomer. Zn(2+) is required as a cofactor. Expressed by the venom gland.

It localises to the secreted. The gelatinase activity is inhibited by EDTA. In terms of biological role, the recombinant protein has gelatinase activity. In vivo, injection of this recombinant into fifth instar L.oleracea (host) larvae results in partial insect mortality associated with the molt to sixth instar, with surviving insects showing retarded development and growth. This Eulophus pennicornis (Parasitoid wasp) protein is Venom metalloproteinase 1.